We begin with the raw amino-acid sequence, 359 residues long: Type-1 angiotensin II receptor (359 aa).

The Extracellular segment spans residues Met-1–Ser-25. N-linked (GlcNAc...) asparagine glycosylation is present at Asn-4. Gln-15 and Asp-17 together coordinate angiotensin II. 2 disulfides stabilise this stretch: Cys-18–Cys-274 and Cys-101–Cys-180. The helical transmembrane segment at Tyr-26 to Phe-55 threads the bilayer. At Tyr-56–Thr-61 the chain is on the cytoplasmic side. Residues Val-62–Ala-89 traverse the membrane as a helical segment. The Extracellular segment spans residues Met-90–Asn-98. Residues His-99 to Asp-125 traverse the membrane as a helical segment. Residues Arg-126–Thr-141 lie on the Cytoplasmic side of the membrane. Residues Met-142–Ile-165 form a helical membrane-spanning segment. Over His-166–Thr-190 the chain is Extracellular. Position 167 (Arg-167) interacts with angiotensin II. Asn-176 is a glycosylation site (N-linked (GlcNAc...) asparagine). Angiotensin II is bound by residues Phe-182, His-183, and Tyr-184. An N-linked (GlcNAc...) asparagine glycan is attached at Asn-188. Residues Leu-191–Thr-216 traverse the membrane as a helical segment. Position 199 (Lys-199) interacts with angiotensin II. At Leu-217 to Phe-239 the chain is on the cytoplasmic side. Residues Arg-240–Leu-268 form a helical membrane-spanning segment. Over Gly-269–Asp-278 the chain is Extracellular. Residues Val-279 to Phe-304 traverse the membrane as a helical segment. The Cytoplasmic segment spans residues Leu-305–Glu-359. Cys-355 carries the S-palmitoyl cysteine lipid modification.

Belongs to the G-protein coupled receptor 1 family. As to quaternary structure, interacts with MAS1. Interacts with ARRB1. Interacts with FLNA (via filamin repeat 21); increases PKA-mediated phosphorylation of FLNA. Post-translationally, C-terminal Ser or Thr residues may be phosphorylated.

It is found in the cell membrane. Functionally, receptor for angiotensin II, a vasoconstricting peptide, which acts as a key regulator of blood pressure and sodium retention by the kidney. The activated receptor in turn couples to G-alpha proteins G(q) (GNAQ, GNA11, GNA14 or GNA15) and thus activates phospholipase C and increases the cytosolic Ca(2+) concentrations, which in turn triggers cellular responses such as stimulation of protein kinase C. The polypeptide is Type-1 angiotensin II receptor (AGTR1) (Meriones unguiculatus (Mongolian jird)).